The chain runs to 309 residues: Probable (S)-ureidoglycine aminohydrolase (309 aa).

Residues 1-22 (MMLPRLLLLVVASALPLASVAA) form the signal peptide. Mn(2+) is bound by residues E245, H247, H251, and Q285. E245 provides a ligand contact to substrate. Residues Q285, Y297, and K301 each contribute to the substrate site.

This sequence belongs to the UGHY family. As to quaternary structure, homooctamer. Mn(2+) serves as cofactor.

Its subcellular location is the endoplasmic reticulum. It catalyses the reaction (S)-2-ureidoglycine + H2O = (S)-ureidoglycolate + NH4(+). Its function is as follows. Involved in the catabolism of purine nucleotides. The sequential activity of AAH, UGLYAH and UAH allows a complete purine breakdown without the intermediate generation of urea. This chain is Probable (S)-ureidoglycine aminohydrolase (UGLYAH), found in Oryza sativa subsp. japonica (Rice).